A 638-amino-acid polypeptide reads, in one-letter code: 1-deoxy-D-xylulose-5-phosphate synthase (638 aa).

Thiamine diphosphate-binding positions include H79 and 120–122 (AHS). D151 contributes to the Mg(2+) binding site. Thiamine diphosphate-binding positions include 152-153 (GA), N180, Y289, and E371. N180 is a Mg(2+) binding site.

The protein belongs to the transketolase family. DXPS subfamily. As to quaternary structure, homodimer. The cofactor is Mg(2+). It depends on thiamine diphosphate as a cofactor.

The enzyme catalyses D-glyceraldehyde 3-phosphate + pyruvate + H(+) = 1-deoxy-D-xylulose 5-phosphate + CO2. It functions in the pathway metabolic intermediate biosynthesis; 1-deoxy-D-xylulose 5-phosphate biosynthesis; 1-deoxy-D-xylulose 5-phosphate from D-glyceraldehyde 3-phosphate and pyruvate: step 1/1. Its function is as follows. Catalyzes the acyloin condensation reaction between C atoms 2 and 3 of pyruvate and glyceraldehyde 3-phosphate to yield 1-deoxy-D-xylulose-5-phosphate (DXP). The protein is 1-deoxy-D-xylulose-5-phosphate synthase of Rhizobium leguminosarum bv. trifolii (strain WSM2304).